The primary structure comprises 419 residues: MEATLNLEPSGRSCWDEPLSIAVRGLAPEQPVTLRSVLRDEKGALFRAHARYRADSHGELDLARTPALGGSFSGLEPMGLLWAMEPDRPFWRLVKRDVQTPFVVELEVLDGHEPDGGQRLAHAVHERHFLAPGVRRVPVREGRVRATLFLPPEPGPFPGIIDLFGVGGGLLEYRASLLAGKGFAVMALAYYNYDDLPKNMETMHMEYFEEAVNYLRSHPEVKGPGIGLLGISKGGELGLAMASFLKGITAAVVINGSVAAVGNTISYKDETIPPVTILRNQVKMTKDGLKDVVDALQSPLVDKKSFIPVERSDTTFLFLVGQDDHNWKSEFYADEISKRLQAHGKEKPQIICYPAAGHYIEPPYFPLCSAGMHLLVGANITFGGEPKPHAMAQLDAWQQLQTFFHKQLGSECLHVSPKI.

Residues serine 232, aspartate 324, and histidine 358 each act as charge relay system in the active site. Serine 416 carries the phosphoserine modification.

This sequence belongs to the C/M/P thioester hydrolase family. In terms of assembly, monomer. Expressed in heart, kidney, brown adipose tissue, white adipose tissue, adrenal gland and muscle.

Its subcellular location is the cytoplasm. It localises to the cytosol. The catalysed reaction is hexadecanoyl-CoA + H2O = hexadecanoate + CoA + H(+). It carries out the reaction decanoyl-CoA + H2O = decanoate + CoA + H(+). It catalyses the reaction dodecanoyl-CoA + H2O = dodecanoate + CoA + H(+). The enzyme catalyses tetradecanoyl-CoA + H2O = tetradecanoate + CoA + H(+). The catalysed reaction is octadecanoyl-CoA + H2O = octadecanoate + CoA + H(+). It carries out the reaction eicosanoyl-CoA + H2O = eicosanoate + CoA + H(+). It catalyses the reaction (9Z)-octadecenoyl-CoA + H2O = (9Z)-octadecenoate + CoA + H(+). The enzyme catalyses (9Z)-hexadecenoyl-CoA + H2O = (9Z)-hexadecenoate + CoA + H(+). The catalysed reaction is (9E)-octadecenoyl-CoA + H2O = (9E)-octadecenoate + CoA + H(+). Its pathway is lipid metabolism; fatty acid metabolism. Its function is as follows. Catalyzes the hydrolysis of acyl-CoAs into free fatty acids and coenzyme A (CoASH), regulating their respective intracellular levels. More active towards saturated and unsaturated long chain fatty acyl-CoAs (C12-C20). The protein is Acyl-coenzyme A thioesterase 1 (Acot1) of Mus musculus (Mouse).